A 523-amino-acid chain; its full sequence is Cytochrome P450 monooxygenase ple5B (523 aa).

A helical transmembrane segment spans residues 16 to 33 (IAAAAAGSAVAVYKLLQL). Asparagine 82, asparagine 103, asparagine 122, asparagine 295, asparagine 379, and asparagine 423 each carry an N-linked (GlcNAc...) asparagine glycan. Residue cysteine 446 participates in heme binding.

The protein belongs to the cytochrome P450 family. Heme serves as cofactor.

The protein localises to the membrane. The protein operates within secondary metabolite biosynthesis; terpenoid biosynthesis. Functionally, cytochrome P450 monooxygenase; part of the gene cluster that mediates the biosynthesis of pleuromutilin, a tricyclic diterpene showing antibacterial properties. The geranylgeranyl diphosphate (GGPP) synthase ple4 catalyzes the first step in pleuromutilin biosynthesis. GGPP is then substrate of the premutilin synthase (PS) ple3 to yield premutilin. Premutilin synthase is a bifunctional enzyme composed of the fusion of a class II diterpene cyclase (DTC) and a class I diterpene synthase (DTS), with the corresponding domains and active sites containing characteristic aspartate-rich motifs. GGPP is first converted to mutildienyl-diphosphate (MPP) at the class II DTC site. MPP is subsequently further cyclized at the class I DTS site, followed by a 1,5-hydride shift and addition of water prior to terminating deprotonation, to yield premutilin. The cytochrome P450 monooxygenases ple5 and ple6 hydroxylate premutilin at C-11 and C-3, respectively, producing 11-hydroxypremutilin and 3-hydroxypremutilin. The combination of the actions of both ple5 and ple6 leads to the production of 3,11-dihydroxypremutilin. The short chain dehydrogenase ple7 further converts 3,11-dihydroxypremutilin into mutilin. The acetyltransferase ple2 then acetylates mutilin to produce 14-O-acetylmutilin. Finally, the cytochrome P450 monooxygenase ple1 catalyzes hydroxylation on the alpha position of the acetyl side chain of 14-O-acetylmutilin to yield pleuromutilin. The polypeptide is Cytochrome P450 monooxygenase ple5B (Rhodocybe pseudopiperita (Clitopilus pseudopiperitus)).